The sequence spans 181 residues: MNPRRKSRLKVVVSIIFGVAVAAGLTLYALSQNIDLFYTPSEIVNGKNDDPDQKPEVGQRIRVGGMVVEGSVKRDDKTLKVEFEANDIGPSITVEYEGILPDLFREGQGIVAQGVLIEPTRLKATEVLAKHDENYMPPELGDKLKEQHGAAGISEADLKGTSARDKAEIERTLKTLQGEAN.

At 1 to 8 (MNPRRKSR) the chain is on the cytoplasmic side. The chain crosses the membrane as a helical; Signal-anchor for type II membrane protein span at residues 9-29 (LKVVVSIIFGVAVAAGLTLYA). The Periplasmic portion of the chain corresponds to 30–181 (LSQNIDLFYT…TLKTLQGEAN (152 aa)). His-131 and Tyr-135 together coordinate heme. Basic and acidic residues-rich tracts occupy residues 135 to 148 (YMPP…KEQH) and 156 to 166 (ADLKGTSARDK). Positions 135–166 (YMPPELGDKLKEQHGAAGISEADLKGTSARDK) are disordered.

The protein belongs to the CcmE/CycJ family.

It localises to the cell inner membrane. In terms of biological role, heme chaperone required for the biogenesis of c-type cytochromes. Transiently binds heme delivered by CcmC and transfers the heme to apo-cytochromes in a process facilitated by CcmF and CcmH. This is Cytochrome c-type biogenesis protein CcmE from Actinobacillus pleuropneumoniae serotype 7 (strain AP76).